The chain runs to 111 residues: BET1-like protein (111 aa).

At methionine 1–lysine 86 the chain is on the cytoplasmic side. Residues serine 9 and serine 37 each carry the phosphoserine modification. One can recognise a t-SNARE coiled-coil homology domain in the interval glutamate 15–methionine 77. The chain crosses the membrane as a helical; Anchor for type IV membrane protein span at residues leucine 87–serine 107. The Lumenal segment spans residues arginine 108 to threonine 111.

Component of a SNARE complex consisting of STX5, YKT6, GOSR1 and BET1L. Interacts with STX5.

It localises to the golgi apparatus membrane. The protein localises to the golgi apparatus. The protein resides in the trans-Golgi network membrane. Functionally, vesicle SNARE required for targeting and fusion of retrograde transport vesicles with the Golgi complex. Required for the integrity of the Golgi complex. The protein is BET1-like protein of Bos taurus (Bovine).